Reading from the N-terminus, the 162-residue chain is Cytochrome c-type biogenesis protein CcmE (162 aa).

Over 1-8 (MNPRRKKR) the chain is Cytoplasmic. Residues 9-29 (LTLAVALIGGVAAITSLLLYA) form a helical; Signal-anchor for type II membrane protein membrane-spanning segment. Topologically, residues 30-162 (LNSNLNLFYT…YSQQKAPDTK (133 aa)) are periplasmic. Heme is bound by residues histidine 131 and tyrosine 135. The interval 142–162 (EAMGQKHEKLDYSQQKAPDTK) is disordered. Positions 153–162 (YSQQKAPDTK) are enriched in polar residues.

Belongs to the CcmE/CycJ family.

It localises to the cell inner membrane. Heme chaperone required for the biogenesis of c-type cytochromes. Transiently binds heme delivered by CcmC and transfers the heme to apo-cytochromes in a process facilitated by CcmF and CcmH. In Shewanella baltica (strain OS223), this protein is Cytochrome c-type biogenesis protein CcmE.